Here is a 354-residue protein sequence, read N- to C-terminus: Maturase K (354 aa).

Belongs to the intron maturase 2 family. MatK subfamily.

The protein resides in the plastid. Its subcellular location is the chloroplast. Its function is as follows. Usually encoded in the trnK tRNA gene intron. Probably assists in splicing its own and other chloroplast group II introns. This is Maturase K (matK) from Hydrangea quercifolia (Oakleaf hydrangea).